Here is a 259-residue protein sequence, read N- to C-terminus: UPF0246 protein PLES_14941 (259 aa).

This sequence belongs to the UPF0246 family.

The polypeptide is UPF0246 protein PLES_14941 (Pseudomonas aeruginosa (strain LESB58)).